The chain runs to 453 residues: Adenylyltransferase and sulfurtransferase MOCS3 (453 aa).

T62 is subject to Phosphothreonine. Residues G101, D122, S129–R133, K146, and D190–N191 each bind ATP. Positions 231 and 234 each coordinate Zn(2+). Residue C248 is the Glycyl thioester intermediate; for adenylyltransferase activity of the active site. Residues C306 and C309 each coordinate Zn(2+). The region spanning Q355–P451 is the Rhodanese domain. The Cysteine persulfide intermediate; for sulfurtransferase activity role is filled by C410.

It in the N-terminal section; belongs to the HesA/MoeB/ThiF family. UBA4 subfamily. It depends on Zn(2+) as a cofactor.

It localises to the cytoplasm. It is found in the cytosol. The catalysed reaction is [molybdopterin-synthase sulfur-carrier protein]-C-terminal Gly-Gly + ATP + H(+) = [molybdopterin-synthase sulfur-carrier protein]-C-terminal Gly-Gly-AMP + diphosphate. It catalyses the reaction [molybdopterin-synthase sulfur-carrier protein]-C-terminal Gly-Gly-AMP + S-sulfanyl-L-cysteinyl-[cysteine desulfurase] + AH2 = [molybdopterin-synthase sulfur-carrier protein]-C-terminal-Gly-aminoethanethioate + L-cysteinyl-[cysteine desulfurase] + A + AMP + 2 H(+). It participates in tRNA modification; 5-methoxycarbonylmethyl-2-thiouridine-tRNA biosynthesis. Its pathway is cofactor biosynthesis; molybdopterin biosynthesis. Its function is as follows. Plays a central role in 2-thiolation of mcm(5)S(2)U at tRNA wobble positions of cytosolic tRNA(Lys), tRNA(Glu) and tRNA(Gln). Also essential during biosynthesis of the molybdenum cofactor. Acts by mediating the C-terminal thiocarboxylation of sulfur carriers URM1 and MOCS2A. Its N-terminus first activates URM1 and MOCS2A as acyl-adenylates (-COAMP), then the persulfide sulfur on the catalytic cysteine is transferred to URM1 and MOCS2A to form thiocarboxylation (-COSH) of their C-terminus. The reaction probably involves hydrogen sulfide that is generated from the persulfide intermediate and that acts as a nucleophile towards URM1 and MOCS2A. Subsequently, a transient disulfide bond is formed. Does not use thiosulfate as sulfur donor; NFS1 probably acting as a sulfur donor for thiocarboxylation reactions. This chain is Adenylyltransferase and sulfurtransferase MOCS3, found in Drosophila sechellia (Fruit fly).